The following is a 411-amino-acid chain: G1/S-specific cyclin pas1 (411 aa).

Disordered stretches follow at residues L210–L253 and S307–Y326. Residues P218 to V252 are compositionally biased toward low complexity.

Belongs to the cyclin family.

Essential for the control of the cell cycle at the G1/S (start) transition. Interacts with the pef1 protein kinase. The pef1/pas1 complex activates the res2/cdc10 complex. In Schizosaccharomyces pombe (strain 972 / ATCC 24843) (Fission yeast), this protein is G1/S-specific cyclin pas1 (pas1).